Consider the following 571-residue polypeptide: L-erythrulose 1-kinase (571 aa).

The 325-residue stretch at 7-331 (SPDDFADEAV…WTAPVETPAY (325 aa)) folds into the DhaK domain. His217 acts as the Tele-hemiaminal-histidine intermediate in catalysis. The DhaL domain maps to 367–567 (RNIVAVLETF…FAMLMKALGE (201 aa)). ATP is bound by residues 396-402 (DGDHGQG), 442-443 (TS), Gly484, Arg539, and 552-554 (DPG).

The catalysed reaction is L-erythrulose + ATP = L-erythrulose 1-phosphate + ADP + H(+). The protein operates within carbohydrate metabolism; L-threitol degradation. Its function is as follows. Kinase that has a preference for L-erythrulose, producing L-erythrulose-1P. Involved in the degradation pathway of L-threitol, that allows M.smegmatis to grow on this compound as the sole carbon source. Is also able to phosphorylate D-erythrulose and dihydroxyacetone in vitro. In Mycolicibacterium smegmatis (strain ATCC 700084 / mc(2)155) (Mycobacterium smegmatis), this protein is L-erythrulose 1-kinase.